Consider the following 642-residue polypeptide: Myrosinase-binding protein 2 (642 aa).

Jacalin-type lectin domains are found at residues serine 2–alanine 151, leucine 156–proline 291, proline 334–proline 477, and serine 490–proline 633. Positions threonine 296–proline 334 are enriched in pro residues. 2 disordered regions span residues threonine 296–glutamate 338 and threonine 479–asparagine 499. A compositionally biased stretch (low complexity) spans threonine 479–serine 490.

The protein belongs to the jacalin lectin family. In terms of tissue distribution, expressed in flowers. Detected mainly in ovules and styles of immature flowers, but also in pistils, styles, stamens, petals and embryos. Not detected in leaves.

This chain is Myrosinase-binding protein 2 (F-ATMBP), found in Arabidopsis thaliana (Mouse-ear cress).